Here is a 430-residue protein sequence, read N- to C-terminus: Histidine--tRNA ligase (430 aa).

Belongs to the class-II aminoacyl-tRNA synthetase family. Homodimer.

It is found in the cytoplasm. The enzyme catalyses tRNA(His) + L-histidine + ATP = L-histidyl-tRNA(His) + AMP + diphosphate + H(+). The sequence is that of Histidine--tRNA ligase from Acinetobacter baumannii (strain ACICU).